We begin with the raw amino-acid sequence, 443 residues long: MKPTLVLVGRPNVGKSTLFNRLTKSRDAIVADMPGLTRDRHYGHGKLGKKPYLVVDTGGFEPLVKEGILHEMARQTEQAIAEADAIIFVVDGRSGLTPHDKEIANKLRRIDRPVFVAVNKAEGMNSGMVEAEFHELGLGEPNAISAAHGEGIRGLVEMALESFPEPEEDEWHSDSVRVAIVGRPNVGKSTLINTLLGEERVIAFDAPGTTRDSIEIDFERGGRKYVLVDTAGMRKRGKVFESIEKFSVVKTLQSIEDANVVILMVDAQADVSDQDAHIADFILQSGRALVVAVNKWDGLDAYTREQTRQILQRKLKFLDFAKFHFISARDNIGLGNMFRSVDSAYAAAMAKMTTPRLTRVLIDAVAKQAPAKHGLFRPKPRYAHQGGSNPPIIVVHGNAVDQVTDSYRRYLEHTFREAFKLQGTPLRIQFVTAKNPFADKDKK.

2 EngA-type G domains span residues 3 to 167 and 176 to 349; these read PTLV…PEPE and VRVA…AAAM. GTP-binding positions include 9 to 16, 56 to 60, 119 to 122, 182 to 189, 229 to 233, and 294 to 297; these read GRPNVGKS, DTGGF, NKAE, DTAGM, and NKWD. Residues 350–434 enclose the KH-like domain; the sequence is AKMTTPRLTR…PLRIQFVTAK (85 aa).

Belongs to the TRAFAC class TrmE-Era-EngA-EngB-Septin-like GTPase superfamily. EngA (Der) GTPase family. In terms of assembly, associates with the 50S ribosomal subunit.

Functionally, GTPase that plays an essential role in the late steps of ribosome biogenesis. The sequence is that of GTPase Der from Dechloromonas aromatica (strain RCB).